Here is a 288-residue protein sequence, read N- to C-terminus: 4-hydroxy-tetrahydrodipicolinate synthase (288 aa).

A pyruvate-binding site is contributed by Thr-42. Tyr-129 acts as the Proton donor/acceptor in catalysis. Lys-157 acts as the Schiff-base intermediate with substrate in catalysis. Ile-198 is a binding site for pyruvate.

It belongs to the DapA family. In terms of assembly, homotetramer; dimer of dimers.

The protein resides in the cytoplasm. The catalysed reaction is L-aspartate 4-semialdehyde + pyruvate = (2S,4S)-4-hydroxy-2,3,4,5-tetrahydrodipicolinate + H2O + H(+). It participates in amino-acid biosynthesis; L-lysine biosynthesis via DAP pathway; (S)-tetrahydrodipicolinate from L-aspartate: step 3/4. Functionally, catalyzes the condensation of (S)-aspartate-beta-semialdehyde [(S)-ASA] and pyruvate to 4-hydroxy-tetrahydrodipicolinate (HTPA). The sequence is that of 4-hydroxy-tetrahydrodipicolinate synthase from Chlamydia abortus (strain DSM 27085 / S26/3) (Chlamydophila abortus).